A 239-amino-acid polypeptide reads, in one-letter code: MLVEVLLNTPAQLSLPLYLPDDETFASFYPGENPSLLAAIQSAVHQSHGSYIYFWSREGGGRSHLLHAACAELSQKGEAVGYVPLDKRAYFVPEVLDGMEQLALVCIDNIECIAGDEQWEMAMFNLYNRIVETGRTRLLITGDRPPRQLNLGLPDLASRLDWGQIYKLQPLSDDEKLQALQLRAKLRGFELPEDVGRFLLKRLDREMRTLFMTLDQLDRASITAQRKLTIPFVKEILSL.

This sequence belongs to the DnaA family. HdA subfamily. As to quaternary structure, the active form seems to be an ADP-bound monomer. Forms the RIDA complex (regulatory inactivation of DnaA) of ATP-DnaA, ADP-Hda and the DNA-loaded beta sliding clamp (dnaN).

Its function is as follows. Mediates the interaction of DNA replication initiator protein DnaA with DNA polymerase subunit beta sliding clamp (dnaN). Stimulates hydrolysis of ATP-DnaA to ADP-DnaA, rendering DnaA inactive for reinitiation, a process called regulatory inhibition of DnaA or RIDA. The chain is DnaA regulatory inactivator Hda from Yersinia enterocolitica serotype O:8 / biotype 1B (strain NCTC 13174 / 8081).